Here is a 71-residue protein sequence, read N- to C-terminus: Large ribosomal subunit protein bL31 (71 aa).

Positions 16, 18, 37, and 40 each coordinate Zn(2+).

This sequence belongs to the bacterial ribosomal protein bL31 family. Type A subfamily. Part of the 50S ribosomal subunit. Zn(2+) serves as cofactor.

Its function is as follows. Binds the 23S rRNA. This chain is Large ribosomal subunit protein bL31, found in Serratia proteamaculans (strain 568).